A 313-amino-acid polypeptide reads, in one-letter code: Protein FixB (313 aa).

255–283 (LYLAVGISGQIQHMVGANASQTIFAINKD) contacts FAD.

This sequence belongs to the ETF alpha-subunit/FixB family. As to quaternary structure, heterodimer of FixA and FixB.

It participates in amine and polyamine metabolism; carnitine metabolism. Functionally, required for anaerobic carnitine reduction. May bring reductant to CaiA. The polypeptide is Protein FixB (Escherichia coli O6:K15:H31 (strain 536 / UPEC)).